The following is a 436-amino-acid chain: GTPase Der (436 aa).

EngA-type G domains follow at residues 4 to 167 (PTVA…PVEE) and 175 to 351 (IRFS…ESQN). Residues 10–17 (GRPNVGKS), 57–61 (DTGGI), 119–122 (NKVD), 181–188 (GRPNVGKS), 229–233 (DTAGM), and 294–297 (NKWD) contribute to the GTP site. One can recognise a KH-like domain in the interval 352–436 (KRIPSAVLND…PIHLIARKRK (85 aa)).

The protein belongs to the TRAFAC class TrmE-Era-EngA-EngB-Septin-like GTPase superfamily. EngA (Der) GTPase family. Associates with the 50S ribosomal subunit.

Functionally, GTPase that plays an essential role in the late steps of ribosome biogenesis. The polypeptide is GTPase Der (Streptococcus pyogenes serotype M28 (strain MGAS6180)).